The following is a 1200-amino-acid chain: ATP-dependent helicase/deoxyribonuclease subunit B (1200 aa).

The protein belongs to the helicase family. AddB/RexB type 2 subfamily. In terms of assembly, heterodimer of AddA and RexB. Requires Mg(2+) as cofactor.

Functionally, the heterodimer acts as both an ATP-dependent DNA helicase and an ATP-dependent, dual-direction single-stranded exonuclease. Recognizes the chi site generating a DNA molecule suitable for the initiation of homologous recombination. This subunit has 5' -&gt; 3' nuclease activity but not helicase activity. The sequence is that of ATP-dependent helicase/deoxyribonuclease subunit B from Lactiplantibacillus plantarum (strain ATCC BAA-793 / NCIMB 8826 / WCFS1) (Lactobacillus plantarum).